Consider the following 227-residue polypeptide: Arginine ABC transporter permease protein ArtM (227 aa).

Residues isoleucine 13–leucine 209 form the ABC transmembrane type-1 domain. 5 consecutive transmembrane segments (helical) span residues leucine 17–leucine 37, leucine 51–glycine 71, isoleucine 78–leucine 98, isoleucine 155–glycine 175, and leucine 188–leucine 208.

Belongs to the binding-protein-dependent transport system permease family. HisMQ subfamily. In terms of assembly, the complex is composed of two ATP-binding proteins (ArtP), two transmembrane proteins (ArtM and ArtQ) and a solute-binding protein (ArtI).

Its subcellular location is the cell inner membrane. Its function is as follows. Part of the ABC transporter complex ArtPIQM involved in arginine transport. Probably responsible for the translocation of the substrate across the membrane. The protein is Arginine ABC transporter permease protein ArtM (artM) of Haemophilus influenzae (strain ATCC 51907 / DSM 11121 / KW20 / Rd).